The primary structure comprises 82 residues: uncharacterized protein (82 aa).

The first 19 residues, 1–19, serve as a signal peptide directing secretion; that stretch reads MKNLLKILLIIAFANPVFA.

This is an uncharacterized protein from Rickettsia prowazekii (strain Madrid E).